An 828-amino-acid polypeptide reads, in one-letter code: Protein SEY1 homolog (828 aa).

At 1–718 (MTEDVMNDDF…SSKNGISWKN (718 aa)) the chain is on the cytoplasmic side. A GB1/RHD3-type G domain is found at 44–284 (GFNYNVLSIL…VPSDGFFYYA (241 aa)). Residue 54-61 (GCQSSGKS) coordinates GTP. A helical transmembrane segment spans residues 719 to 739 (IPPPFWILLLLCSWNELCSVL). The Lumenal portion of the chain corresponds to 740–742 (RIV). A helical transmembrane segment spans residues 743-763 (FKVQVLIPLIILGFIVVQYFS). The Cytoplasmic segment spans residues 764-828 (HLVFGTSADA…NDSGKKAEEN (65 aa)).

It belongs to the TRAFAC class dynamin-like GTPase superfamily. GB1/RHD3 GTPase family. RHD3 subfamily.

The protein localises to the endoplasmic reticulum membrane. In terms of biological role, probable GTP-binding protein that may be involved in cell development. This is Protein SEY1 homolog from Babesia bovis.